The sequence spans 260 residues: Small ribosomal subunit protein bS6 (260 aa).

It belongs to the bacterial ribosomal protein bS6 family.

Binds together with bS18 to 16S ribosomal RNA. This is Small ribosomal subunit protein bS6 from Wolbachia sp. subsp. Brugia malayi (strain TRS).